The following is a 125-amino-acid chain: Large ribosomal subunit protein bL17 (125 aa).

Belongs to the bacterial ribosomal protein bL17 family. Part of the 50S ribosomal subunit. Contacts protein L32.

This chain is Large ribosomal subunit protein bL17, found in Acinetobacter baylyi (strain ATCC 33305 / BD413 / ADP1).